A 92-amino-acid chain; its full sequence is C-C motif chemokine 4 (92 aa).

Residues 1–23 form the signal peptide; that stretch reads MKLCVTVLSLLVLVAAFCSPALS. Disulfide bonds link C34–C58 and C35–C74.

It belongs to the intercrine beta (chemokine CC) family. As to quaternary structure, homodimer. Interacts with CCR5.

Its subcellular location is the secreted. Functionally, monokine with inflammatory and chemokinetic properties. This is C-C motif chemokine 4 (CCL4) from Canis lupus familiaris (Dog).